Consider the following 443-residue polypeptide: Glucose-6-phosphate isomerase (443 aa).

Glu285 acts as the Proton donor in catalysis. Residues His306 and Lys420 contribute to the active site.

The protein belongs to the GPI family.

It localises to the cytoplasm. It catalyses the reaction alpha-D-glucose 6-phosphate = beta-D-fructose 6-phosphate. Its pathway is carbohydrate biosynthesis; gluconeogenesis. The protein operates within carbohydrate degradation; glycolysis; D-glyceraldehyde 3-phosphate and glycerone phosphate from D-glucose: step 2/4. In terms of biological role, catalyzes the reversible isomerization of glucose-6-phosphate to fructose-6-phosphate. This chain is Glucose-6-phosphate isomerase, found in Staphylococcus aureus (strain Mu3 / ATCC 700698).